A 441-amino-acid polypeptide reads, in one-letter code: Ribulose bisphosphate carboxylase large chain (441 aa).

2 residues coordinate substrate: Asn89 and Thr139. Lys141 functions as the Proton acceptor in the catalytic mechanism. Lys143 serves as a coordination point for substrate. Mg(2+) contacts are provided by Lys167, Asp169, and Glu170. Lys167 carries the N6-carboxylysine modification. Catalysis depends on His260, which acts as the Proton acceptor. Substrate contacts are provided by Arg261, His293, and Ser345.

Belongs to the RuBisCO large chain family. Type I subfamily. In terms of assembly, heterohexadecamer of 8 large chains and 8 small chains; disulfide-linked. The disulfide link is formed within the large subunit homodimers. It depends on Mg(2+) as a cofactor. The disulfide bond which can form in the large chain dimeric partners within the hexadecamer appears to be associated with oxidative stress and protein turnover.

The protein localises to the plastid. It is found in the chloroplast. It catalyses the reaction 2 (2R)-3-phosphoglycerate + 2 H(+) = D-ribulose 1,5-bisphosphate + CO2 + H2O. The catalysed reaction is D-ribulose 1,5-bisphosphate + O2 = 2-phosphoglycolate + (2R)-3-phosphoglycerate + 2 H(+). Its function is as follows. RuBisCO catalyzes two reactions: the carboxylation of D-ribulose 1,5-bisphosphate, the primary event in carbon dioxide fixation, as well as the oxidative fragmentation of the pentose substrate in the photorespiration process. Both reactions occur simultaneously and in competition at the same active site. This is Ribulose bisphosphate carboxylase large chain from Coriandrum sativum (Coriander).